The primary structure comprises 148 residues: Cystatin-C (148 aa).

An N-terminal signal peptide occupies residues 1–30 (MVGSPRAPLLLLASLIVALALALAVSPAAA). Pyrrolidone carboxylic acid is present on glutamine 31. A Secondary area of contact motif is present at residues 84-88 (QVVSG). Intrachain disulfides connect cysteine 102–cysteine 112 and cysteine 126–cysteine 146.

The protein resides in the secreted. Functionally, this is a thiol proteinase inhibitor. In Bos taurus (Bovine), this protein is Cystatin-C (CST3).